Consider the following 321-residue polypeptide: MNRPERLQPGVKLRDADKVARIPVKIMPSERETMLRKPDWLRVKLPASNQRITEIKQALRSNGLHSVCEEASCPNLAECFNHGTATFMILGAICTRRCPFCDVAHGRPLKPDADEPVKLAKTIRDMKLKYVVITSVDRDDLRDGGAQHFADCIREIRALNPHIQIETLVPDFRGRIDVALDILSTNPPDVFNHNLETAPAHYRKARPGANYQWSLDLLKRFKERHPNIPTKSGLMMGLGETNEEIIQVLKDLRAHDVNMLTLGQYLQPSKFHLPVERYVSPQEFDELKVIAEDLGFSHAACGPLVRSSYHADLQAQGKEVK.

Residues C68, C73, C79, C94, C98, C101, and S308 each coordinate [4Fe-4S] cluster. The region spanning 80–297 is the Radical SAM core domain; that stretch reads FNHGTATFMI…KVIAEDLGFS (218 aa).

This sequence belongs to the radical SAM superfamily. Lipoyl synthase family. [4Fe-4S] cluster serves as cofactor.

The protein resides in the cytoplasm. It carries out the reaction [[Fe-S] cluster scaffold protein carrying a second [4Fe-4S](2+) cluster] + N(6)-octanoyl-L-lysyl-[protein] + 2 oxidized [2Fe-2S]-[ferredoxin] + 2 S-adenosyl-L-methionine + 4 H(+) = [[Fe-S] cluster scaffold protein] + N(6)-[(R)-dihydrolipoyl]-L-lysyl-[protein] + 4 Fe(3+) + 2 hydrogen sulfide + 2 5'-deoxyadenosine + 2 L-methionine + 2 reduced [2Fe-2S]-[ferredoxin]. It participates in protein modification; protein lipoylation via endogenous pathway; protein N(6)-(lipoyl)lysine from octanoyl-[acyl-carrier-protein]: step 2/2. Its function is as follows. Catalyzes the radical-mediated insertion of two sulfur atoms into the C-6 and C-8 positions of the octanoyl moiety bound to the lipoyl domains of lipoate-dependent enzymes, thereby converting the octanoylated domains into lipoylated derivatives. This chain is Lipoyl synthase, found in Shewanella amazonensis (strain ATCC BAA-1098 / SB2B).